The primary structure comprises 130 residues: Phosphoribosyl-AMP cyclohydrolase (130 aa).

Aspartate 78 serves as a coordination point for Mg(2+). Zn(2+) is bound at residue cysteine 79. Mg(2+) is bound by residues aspartate 80 and aspartate 82. The Zn(2+) site is built by cysteine 96 and cysteine 103.

The protein belongs to the PRA-CH family. In terms of assembly, homodimer. Mg(2+) is required as a cofactor. It depends on Zn(2+) as a cofactor.

It localises to the cytoplasm. It catalyses the reaction 1-(5-phospho-beta-D-ribosyl)-5'-AMP + H2O = 1-(5-phospho-beta-D-ribosyl)-5-[(5-phospho-beta-D-ribosylamino)methylideneamino]imidazole-4-carboxamide. It functions in the pathway amino-acid biosynthesis; L-histidine biosynthesis; L-histidine from 5-phospho-alpha-D-ribose 1-diphosphate: step 3/9. Catalyzes the hydrolysis of the adenine ring of phosphoribosyl-AMP. This chain is Phosphoribosyl-AMP cyclohydrolase, found in Nitrosospira multiformis (strain ATCC 25196 / NCIMB 11849 / C 71).